The chain runs to 108 residues: Large ribosomal subunit protein bL21 (108 aa).

Belongs to the bacterial ribosomal protein bL21 family. In terms of assembly, part of the 50S ribosomal subunit. Contacts protein L20.

In terms of biological role, this protein binds to 23S rRNA in the presence of protein L20. The protein is Large ribosomal subunit protein bL21 of Orientia tsutsugamushi (strain Ikeda) (Rickettsia tsutsugamushi).